Reading from the N-terminus, the 370-residue chain is Cysteine-type anaerobic sulfatase-maturating enzyme (370 aa).

The region spanning Met-1–Glu-227 is the Radical SAM core domain. [4Fe-4S] cluster-binding residues include Cys-15 and Cys-19. Tyr-21 contacts S-adenosyl-L-methionine. Cys-22 serves as a coordination point for [4Fe-4S] cluster. 4 residues coordinate S-adenosyl-L-methionine: Gly-66, Ser-122, Arg-134, and Leu-195. Positions 255, 261, and 276 each coordinate [4Fe-4S] cluster. Asp-277 functions as the Proton acceptor in the catalytic mechanism. The [4Fe-4S] cluster site is built by Cys-317, Cys-320, Cys-326, Cys-330, and Cys-348.

This sequence belongs to the radical SAM superfamily. Anaerobic sulfatase-maturating enzyme family. As to quaternary structure, monomer. It depends on [4Fe-4S] cluster as a cofactor.

It carries out the reaction L-cysteinyl-[sulfatase] + S-adenosyl-L-methionine + H2O = 3-oxo-L-alanyl-[sulfatase] + hydrogen sulfide + 5'-deoxyadenosine + L-methionine + 2 H(+). Its pathway is protein modification; sulfatase oxidation. In terms of biological role, involved in 'Cys-type' sulfatase maturation under anaerobic conditions. Catalyzes the post-translational modification of cysteine ('Cys-51' in the arylsulfatase CPF_0221) into 3-oxoalanine (also known as C(alpha)-formylglycine (FGly)), by a free radical chemical mechanism initiated via the reductive cleavage of S-adenosyl-L-methionine (SAM). Is also able to oxidize a serine residue in a synthetic substrate to FGly in vitro, and in a serine variant of a Cys-type sulfatase in vivo, but this activity is not physiological. Converts threonyl peptides to the corresponding ketone product, and also allo-threonyl peptides, but with a significantly reduced efficiency. This chain is Cysteine-type anaerobic sulfatase-maturating enzyme, found in Clostridium perfringens (strain ATCC 13124 / DSM 756 / JCM 1290 / NCIMB 6125 / NCTC 8237 / Type A).